A 463-amino-acid polypeptide reads, in one-letter code: Protein MRG3-like (463 aa).

The chain crosses the membrane as a helical span at residues 54-74 (WVLSTGIVSFIAFNIWWVYWP). TPR repeat units lie at residues 84 to 118 (KILR…CKAE), 128 to 161 (TGIE…FYNE), 358 to 389 (ELIR…ANEN), and 409 to 442 (SLAH…SEMI).

Belongs to the MGR3 family.

The protein resides in the membrane. The chain is Protein MRG3-like from Saccharomyces cerevisiae (strain ATCC 204508 / S288c) (Baker's yeast).